We begin with the raw amino-acid sequence, 299 residues long: Pyridoxal 5'-phosphate synthase subunit PdxS (299 aa).

A D-ribose 5-phosphate-binding site is contributed by aspartate 29. Catalysis depends on lysine 86, which acts as the Schiff-base intermediate with D-ribose 5-phosphate. Glycine 158 contacts D-ribose 5-phosphate. Arginine 170 is a binding site for D-glyceraldehyde 3-phosphate. Residues glycine 219 and 240–241 each bind D-ribose 5-phosphate; that span reads GS.

It belongs to the PdxS/SNZ family. In the presence of PdxT, forms a dodecamer of heterodimers.

It catalyses the reaction aldehydo-D-ribose 5-phosphate + D-glyceraldehyde 3-phosphate + L-glutamine = pyridoxal 5'-phosphate + L-glutamate + phosphate + 3 H2O + H(+). It functions in the pathway cofactor biosynthesis; pyridoxal 5'-phosphate biosynthesis. Functionally, catalyzes the formation of pyridoxal 5'-phosphate from ribose 5-phosphate (RBP), glyceraldehyde 3-phosphate (G3P) and ammonia. The ammonia is provided by the PdxT subunit. Can also use ribulose 5-phosphate and dihydroxyacetone phosphate as substrates, resulting from enzyme-catalyzed isomerization of RBP and G3P, respectively. This chain is Pyridoxal 5'-phosphate synthase subunit PdxS, found in Protochlamydia amoebophila (strain UWE25).